The sequence spans 230 residues: Flagellar L-ring protein (230 aa).

The N-terminal stretch at 1 to 22 (MSPLSNFARTALACAVAALLGG) is a signal peptide. Cys23 is lipidated: N-palmitoyl cysteine. Cys23 carries the S-diacylglycerol cysteine lipid modification.

It belongs to the FlgH family. As to quaternary structure, the basal body constitutes a major portion of the flagellar organelle and consists of four rings (L,P,S, and M) mounted on a central rod.

It is found in the cell outer membrane. The protein localises to the bacterial flagellum basal body. Functionally, assembles around the rod to form the L-ring and probably protects the motor/basal body from shearing forces during rotation. The protein is Flagellar L-ring protein of Stenotrophomonas maltophilia (strain R551-3).